We begin with the raw amino-acid sequence, 1285 residues long: MTVKLGDAGSGEEGLKKLGKRTADEESLDGEGPGGADAADSSSTKRDGQTPRASGAPAPPRGLPTPSPPQGSPQDQHHFLRSSVRPQSKRPRKDAPCALGSGGASGSGPRGKGSDGGASSSGNVSGATPATPAGGSRSSSRNIGSSGPEKEEGKKVRRQWESWSTEDKNTFFEGLYEHGKDFEAIQNNIALKYKKKGKPASMVKNKEQVRHFYYRTWHKITKYIDFDNVFSRGLKKSSQELYGLICYGELRKKIGGCMDDKNATKLNELIQVGATTVRYKGRNLRIKAPMCRALKKLCDPDGLSDEEDQKPVRLPLKVPVELQPRNNHAWARVQSLAQNPRLRMIVELHRKVSSLIEFLKQKWALHEVRIRKTLEERQLQGSSTVQTQEKVALHLFPGENCTLTPLPGVARVVHSKAFCTVHWQEGGRCKQGTKDIHSLPPAQILGIQSGQGIARGQLKCQRSSAEGKGGGRLLPTADASQSSGESSPESAPAEGAAPSLSSPDAPDRPHGLQDSGPHLEKTPVTALAVGRDSPIQESGALPCPCGQPPDLEDELSLLDPFPRYLKSCQDLIIPEQCRRADTRSGREHPPLGSVASPETLTPSSGAVADSAPPGLDPQPGTDHQPDTRLQSDICTKELANASSEESQEKGSPSEHLSSQGQPATRPSKEVPASQLAQQLREEGWSLQTSESLTLAEVYLMMGKPTKLQLEYDWLAVLGPESQAPTAQGQTALSRSSPSALHQQRLLSCLLRLISTEVHPKMAFEANTASTASVRPTQEEQSTTPPGKVVTINSRSPRCSRNPSTLRSNKTFPSASAPCSPGLRNPPRPLLVAGPSSTGSSDSDGGLFAVPTTLPPNSRHGKLFSPSKEAELTFRQHLDSISIQSDFFSPKPKKLRKRHLRKPLVVQRTLLPRPSENQSHNVCSFSILSNSPIAGRGWFRPIQSSLTKAALSRPIVPKVLPSQATSHLPSAIDLAAQSAGIIPGSPLPILDTDGSSGISPLSSEQATTAISGQGDTGPHQNRDPVTAVRGTNDPFISVTRPEQEPMTDGFQGSPALTLPELSKANLQNGLSIPLPSSESSSTRLSPPNVSALLDISLPGPPEDVLSQGEPATQISDSIIEIAISSGQYSEGVPLSPAKLNGSDSSKSLPSPSSSPQPNWIASPTHDPQWYPSDSADSSLSSLFASFISPEKSRKMLPTTVGANSGTSLLGPSLLDGNSRDSFVSRSLADVAEVVDSQLVCMMNENSIDYISRFNDLAQELSITEPGRREVLFDGGGGGNPVGDLSQ.

The segment at 1–161 (MTVKLGDAGS…EGKKVRRQWE (161 aa)) is disordered. The span at 13–24 (EGLKKLGKRTAD) shows a compositional bias: basic and acidic residues. Positions 57–71 (PAPPRGLPTPSPPQG) are enriched in pro residues. A compositionally biased stretch (gly residues) spans 100 to 116 (GSGGASGSGPRGKGSDG). Low complexity-rich tracts occupy residues 117-126 (GASSSGNVSG) and 134-147 (GGSR…GSSG). The segment covering 148–161 (PEKEEGKKVRRQWE) has biased composition (basic and acidic residues). An SANT domain is found at 158-221 (RQWESWSTED…FYYRTWHKIT (64 aa)). Phosphoserine is present on serine 304. Disordered stretches follow at residues 456–519 (GQLK…GPHL), 579–673 (RADT…VPAS), 766–843 (NTAS…SDSD), 994–1055 (SSGI…SPAL), 1068–1107 (GLSI…LSQG), and 1132–1172 (PLSP…YPSD). A compositionally biased stretch (low complexity) spans 479–503 (ASQSSGESSPESAPAEGAAPSLSSP). 2 stretches are compositionally biased toward basic and acidic residues: residues 505–519 (APDR…GPHL) and 579–589 (RADTRSGREHP). Polar residues-rich tracts occupy residues 654-664 (EHLSSQGQPAT) and 766-784 (NTAS…STTP). The span at 792 to 803 (NSRSPRCSRNPS) shows a compositional bias: low complexity. Positions 804–813 (TLRSNKTFPS) are enriched in polar residues. Low complexity predominate over residues 833–843 (GPSSTGSSDSD). Over residues 994–1012 (SSGISPLSSEQATTAISGQ) the composition is skewed to polar residues. Composition is skewed to low complexity over residues 1069 to 1086 (LSIP…LSPP) and 1141 to 1156 (SDSS…SPQP). A Phosphoserine modification is found at serine 1284.

This sequence belongs to the cramped family.

Its subcellular location is the nucleus. This is Protein cramped-like from Mus musculus (Mouse).